Consider the following 374-residue polypeptide: Flavonoid O-methyltransferase-like protein Os11g0303600 (374 aa).

S-adenosyl-L-homocysteine is bound by residues D242, D262, M263, and K276. The Proton acceptor role is filled by H280.

The protein belongs to the class I-like SAM-binding methyltransferase superfamily. Cation-independent O-methyltransferase family. COMT subfamily.

This is Flavonoid O-methyltransferase-like protein Os11g0303600 from Oryza sativa subsp. japonica (Rice).